Reading from the N-terminus, the 445-residue chain is UNC93-like protein MFSD11 (445 aa).

The helical transmembrane segment at 8 to 28 (LLNIIILGIGFMFMFTAFQTS) threads the bilayer. An N-linked (GlcNAc...) asparagine glycan is attached at Asn40. 4 helical membrane-spanning segments follow: residues 53–73 (AIIY…VAVI), 74–94 (GCQM…AMFI), 98–118 (TWSF…LWTA), and 138–158 (IFWA…YLAW). Asn163 carries N-linked (GlcNAc...) asparagine glycosylation. 7 consecutive transmembrane segments (helical) span residues 170–190 (RTVF…FFLI), 239–259 (MLLL…YSGV), 277–297 (LIGL…GLFG), 309–329 (PVVI…YLYM), 345–365 (AFIN…GLGD), 385–405 (APAF…AFFY), and 415–435 (LLIL…VEWG).

The protein belongs to the unc-93 family.

It localises to the membrane. The protein is UNC93-like protein MFSD11 (mfsd11) of Xenopus tropicalis (Western clawed frog).